Consider the following 1423-residue polypeptide: uncharacterized protein (1423 aa).

The signal sequence occupies residues methionine 1–serine 28. Residues alanine 29–threonine 1321 are Extracellular-facing. 6 N-linked (GlcNAc...) asparagine glycosylation sites follow: asparagine 94, asparagine 306, asparagine 355, asparagine 483, asparagine 666, and asparagine 903. In terms of domain architecture, NIDO spans serine 184 to valine 347. The region spanning valine 638–arginine 818 is the AMOP domain. A helical transmembrane segment spans residues tryptophan 1322–cysteine 1342. The Cytoplasmic segment spans residues cysteine 1343 to valine 1423. The segment at serine 1364–tyrosine 1401 is disordered. The span at proline 1378–tyrosine 1401 shows a compositional bias: basic and acidic residues.

It localises to the membrane. This is an uncharacterized protein from Caenorhabditis elegans.